Consider the following 219-residue polypeptide: Pyridoxine/pyridoxamine 5'-phosphate oxidase (219 aa).

Positions 1–23 (MTSSVIPPSPSAADYAAEGDRPL) are disordered. FMN contacts are provided by residues 66–71 (RIVLLK), 81–82 (FT), lysine 88, and glutamine 110. Lysine 71 lines the substrate pocket. The substrate site is built by tyrosine 128, arginine 132, and serine 136. Residues 145-146 (QS) and tryptophan 191 each bind FMN. Residue 197 to 199 (RMH) coordinates substrate. Arginine 201 contributes to the FMN binding site.

The protein belongs to the pyridoxamine 5'-phosphate oxidase family. In terms of assembly, homodimer. FMN serves as cofactor.

It catalyses the reaction pyridoxamine 5'-phosphate + O2 + H2O = pyridoxal 5'-phosphate + H2O2 + NH4(+). The enzyme catalyses pyridoxine 5'-phosphate + O2 = pyridoxal 5'-phosphate + H2O2. It participates in cofactor metabolism; pyridoxal 5'-phosphate salvage; pyridoxal 5'-phosphate from pyridoxamine 5'-phosphate: step 1/1. Its pathway is cofactor metabolism; pyridoxal 5'-phosphate salvage; pyridoxal 5'-phosphate from pyridoxine 5'-phosphate: step 1/1. In terms of biological role, catalyzes the oxidation of either pyridoxine 5'-phosphate (PNP) or pyridoxamine 5'-phosphate (PMP) into pyridoxal 5'-phosphate (PLP). This chain is Pyridoxine/pyridoxamine 5'-phosphate oxidase, found in Hyphomonas neptunium (strain ATCC 15444).